The chain runs to 24 residues: Aldehyde dehydrogenase gamma chain (24 aa).

Heterotrimer composed of an alpha, a beta and a gamma chain. Requires [2Fe-2S] cluster as cofactor.

The catalysed reaction is an aldehyde + a quinone + H2O = a quinol + a carboxylate + H(+). This is Aldehyde dehydrogenase gamma chain from Comamonas testosteroni (Pseudomonas testosteroni).